The primary structure comprises 103 residues: Phospholipase A2 large subunit (103 aa).

Ca(2+) contacts are provided by Trp-7, Gly-9, and Gly-11. Intrachain disulfides connect Cys-8/Cys-30, Cys-29/Cys-68, Cys-36/Cys-61, and Cys-59/Cys-96. Asn-16 is a glycosylation site (N-linked (GlcNAc...) asparagine). His-33 is a catalytic residue. Position 34 (Asp-34) interacts with Ca(2+).

It belongs to the phospholipase A2 family. Group III subfamily. As to quaternary structure, heterodimer composed of a large subunit and a small subunit; disulfide-linked. Ca(2+) serves as cofactor. In terms of tissue distribution, expressed by the venom gland.

The protein localises to the secreted. The enzyme catalyses a 1,2-diacyl-sn-glycero-3-phosphocholine + H2O = a 1-acyl-sn-glycero-3-phosphocholine + a fatty acid + H(+). Its function is as follows. Phospholipase toxin, which catalyzes the calcium-dependent hydrolysis of the 2-acyl groups in 3-sn-phosphoglycerides. Inhibits both skeletal (RYR1) and cardiac (RYR2) ryanodine receptors (calcium release channels). Probably blocks ryanodine receptors by generating a lipid product. In Chersonesometrus fulvipes (Indian black scorpion), this protein is Phospholipase A2 large subunit.